A 100-amino-acid chain; its full sequence is Large ribosomal subunit protein uL23 (100 aa).

Belongs to the universal ribosomal protein uL23 family. Part of the 50S ribosomal subunit. Contacts protein L29, and trigger factor when it is bound to the ribosome.

Functionally, one of the early assembly proteins it binds 23S rRNA. One of the proteins that surrounds the polypeptide exit tunnel on the outside of the ribosome. Forms the main docking site for trigger factor binding to the ribosome. The protein is Large ribosomal subunit protein uL23 of Mycobacterium marinum (strain ATCC BAA-535 / M).